A 319-amino-acid polypeptide reads, in one-letter code: MENFEIWVEKYRPRTLDEVVGQDEVIQRLKGYVERKNIPHLLFSGPPGTGKTATAIALARDLFGENWRDNFIEMNASDERGIDVVRHKIKEFARTAPIGGAPFKIIFLDEADALTADAQAALRRTMEMYSKSCRFILSCNYVSRIIEPIQSRCAVFRFKPVPKEAMKKRLLEICEKEGVKITEDGLEALIYISGGDFRKAINALQGAAAIGEVVDADTIYQITATARPEEMTELIQTALKGNFMEARELLDRLMVEYGMSGEDIVAQLFREIISMPIKDSLKVQLIDKLGEVDFRLTEGANERIQLDAYLAYLSTLAKK.

An ATP-binding site is contributed by 45 to 52 (GPPGTGKT).

It belongs to the activator 1 small subunits family. RfcS subfamily. As to quaternary structure, heteropentamer composed of four small subunits (RfcS) and one large subunit (RfcL). Both subunits interact with PCNA.

Part of the RFC clamp loader complex which loads the PCNA sliding clamp onto DNA. The complex possesses DNA-dependent ATPase activity which is further stimulated by PCNA. This is Replication factor C small subunit (rfcS) from Archaeoglobus fulgidus (strain ATCC 49558 / DSM 4304 / JCM 9628 / NBRC 100126 / VC-16).